The chain runs to 285 residues: tRNA pseudouridine synthase B (285 aa).

Catalysis depends on D40, which acts as the Nucleophile.

It belongs to the pseudouridine synthase TruB family. Type 1 subfamily.

The enzyme catalyses uridine(55) in tRNA = pseudouridine(55) in tRNA. Responsible for synthesis of pseudouridine from uracil-55 in the psi GC loop of transfer RNAs. This chain is tRNA pseudouridine synthase B, found in Caldanaerobacter subterraneus subsp. tengcongensis (strain DSM 15242 / JCM 11007 / NBRC 100824 / MB4) (Thermoanaerobacter tengcongensis).